The primary structure comprises 404 residues: Cysteine desulfurase IscS (404 aa).

Residues 75–76 (AT), N155, Q183, and 203–205 (TGH) each bind pyridoxal 5'-phosphate. Position 206 is an N6-(pyridoxal phosphate)lysine (K206). T243 provides a ligand contact to pyridoxal 5'-phosphate. Residue C328 is the Cysteine persulfide intermediate of the active site. C328 serves as a coordination point for [2Fe-2S] cluster.

This sequence belongs to the class-V pyridoxal-phosphate-dependent aminotransferase family. NifS/IscS subfamily. As to quaternary structure, homodimer. Forms a heterotetramer with IscU, interacts with other sulfur acceptors. It depends on pyridoxal 5'-phosphate as a cofactor.

It localises to the cytoplasm. It carries out the reaction (sulfur carrier)-H + L-cysteine = (sulfur carrier)-SH + L-alanine. Its pathway is cofactor biosynthesis; iron-sulfur cluster biosynthesis. Its function is as follows. Master enzyme that delivers sulfur to a number of partners involved in Fe-S cluster assembly, tRNA modification or cofactor biosynthesis. Catalyzes the removal of elemental sulfur atoms from cysteine to produce alanine. Functions as a sulfur delivery protein for Fe-S cluster synthesis onto IscU, an Fe-S scaffold assembly protein, as well as other S acceptor proteins. In Enterobacter sp. (strain 638), this protein is Cysteine desulfurase IscS.